The primary structure comprises 595 residues: MHEYRTHDCGALRAADAGITARLSGWVNVKRDHGGLLFIDLRDHYGITQCVFPAGSPVFAAAEALRAESVITVTGRVVKRDADTVNPRLPTGEIELVAETVEVQSTADVLPIQVAGEAQFPEELRLRYRFLDLRREKLHRNIMLRANVIAWLRREMTARGFTEFTTPILTASSPEGARDFLVPSRVHPGQFYALPQAPQQFKQLLMVAGFDRYFQIAPCFRDEASRADRAPGEFYQLDFEMSFVTQEDVFATIEPVLGGLFREFGGGRGVTQWPFPRIAYDEALLKYGSDKPDLRNPLLITDVTEAFRDSGFGLFAKIVAGGGVVRAIPAPGTGGNPRSFFDKLNDWARSEGAGGLGYIIFAPDGAKGPIAKNLEPARAEAIREATGASVGDAVFFAAGKPLEAAKFAGTVRTKLGTDLGLIDGAKFEFCWIVDFPMYERDEETGQIVFSHNPFSMPQGGLEALNGQDPLTIKAFQYDIVCNGVELSSGAIRNHRPDIMLRAFEIAGYGAEEVEARFGGMLNAFRYGAPPHGGSAPGVDRMVMLLADEPNLREVIAFPLNQQGQDLLMGAPAPVPAARLKELSLAIALPPAPKKG.

Position 175 (glutamate 175) interacts with L-aspartate. The aspartate stretch occupies residues 199–202 (QQFK). Arginine 221 and histidine 451 together coordinate L-aspartate. 221-223 (RDE) is an ATP binding site. Glutamate 485 contacts ATP. An L-aspartate-binding site is contributed by arginine 492. 537 to 540 (GVDR) is a binding site for ATP.

Belongs to the class-II aminoacyl-tRNA synthetase family. Type 1 subfamily. Homodimer.

It localises to the cytoplasm. The catalysed reaction is tRNA(Asx) + L-aspartate + ATP = L-aspartyl-tRNA(Asx) + AMP + diphosphate. Functionally, aspartyl-tRNA synthetase with relaxed tRNA specificity since it is able to aspartylate not only its cognate tRNA(Asp) but also tRNA(Asn). Reaction proceeds in two steps: L-aspartate is first activated by ATP to form Asp-AMP and then transferred to the acceptor end of tRNA(Asp/Asn). The chain is Aspartate--tRNA(Asp/Asn) ligase from Acidiphilium cryptum (strain JF-5).